A 488-amino-acid chain; its full sequence is MAEKVQYYMEQSVPELEDLLEKNIFNRDEINNIIKTRRVFEEKLARRQVKLNDFLSYIQYEINLETLRAKRHKRLNITGKITISDYAGPRKVLFLFLRATNKFFGDVTLWLDYIHYAQKIKAVNIVGKICVAALQKHPNNAELWVVACDHEFSINANVSAARALMNRALRLNQENPVIWAAYFRLELSYMTKLFARSQILTGNISSKTENITNGVSEDTIGSLSSDTIQLPMVSMEEFLGSSSSEVRKNDSDLNISDDIGNISSKEQQTQKFANVLLQIILNSRKNLSLQNYVGFFVSVLDALFECFDVPVVQYMYQENIIGICNEHFEHFKNESGEIYGVLLHRWCFLEIFIKLRGAYPSNDSGISGKGIFGLKKNDPRITSMVLTDPGFVDDLQAIVEKYQSISSDFQIPFKTKKIFYSFFVKTLHAISSSSAAESSIALALHMLVINAFQSMEKLKILTFDDSLQEIYKEAQIQSGTFMSNATLS.

HAT repeat units lie at residues 31-63, 87-119, 121-153, and 156-188; these read NNIIKTRRVFEEKLARRQVKLNDFLSYIQYEIN, AGPRKVLFLFLRATNKFFGDVTLWLDYIHYAQK, KAVNIVGKICVAALQKHPNNAELWVVACDHEFS, and ANVSAARALMNRALRLNQENPVIWAAYFRLELS.

Belongs to the UTP6 family. Component of the ribosomal small subunit (SSU) processome, composed of the 35S pre-rRNA precursor, the U3 snoRNA, and at least 40 protein subunits. Interacts with U3 snoRNA.

The protein resides in the nucleus. Its subcellular location is the nucleolus. Component of the SSU processome, a pre-ribosomal particle required for the maturation of the 18S rRNA from the 35S pre-rRNA precursor. The polypeptide is U3 small nucleolar RNA-associated protein 6 (utp6) (Schizosaccharomyces pombe (strain 972 / ATCC 24843) (Fission yeast)).